The chain runs to 275 residues: tRNA pseudouridine synthase A (275 aa).

D72 (nucleophile) is an active-site residue. Residue Y133 coordinates substrate.

This sequence belongs to the tRNA pseudouridine synthase TruA family. As to quaternary structure, homodimer.

It carries out the reaction uridine(38/39/40) in tRNA = pseudouridine(38/39/40) in tRNA. In terms of biological role, formation of pseudouridine at positions 38, 39 and 40 in the anticodon stem and loop of transfer RNAs. The polypeptide is tRNA pseudouridine synthase A (Gluconobacter oxydans (strain 621H) (Gluconobacter suboxydans)).